The sequence spans 260 residues: UPF0246 protein Bcep1808_2308 (260 aa).

Belongs to the UPF0246 family.

The sequence is that of UPF0246 protein Bcep1808_2308 from Burkholderia vietnamiensis (strain G4 / LMG 22486) (Burkholderia cepacia (strain R1808)).